A 405-amino-acid polypeptide reads, in one-letter code: Pentatricopeptide repeat-containing protein At1g11630, mitochondrial (405 aa).

A mitochondrion-targeting transit peptide spans 1-72 (MAFLFRIRTS…RSTSLSPDYH (72 aa)). 9 PPR repeats span residues 74–108 (DRIIFSVAVVTLAREKHFVAVSQLLDGFIQNQPDP), 110–144 (SESFAVRAIILYGRANMLDRSIQTFRNLEQYEIPR), 145–180 (TVKSLNALLFACLMAKDYKEANRVYLEMPKMYGIEP), 181–215 (DLETYNRMIRVLCESGSTSSSYSIVAEMERKWIKP), 216–250 (TAASFGLMIDGFYKEEKFDEVRKVMRMMDEFGVHV), 251–285 (GVATYNIMIQCLCKRKKSAEAKALIDGVMSCRMRP), 286–320 (NSVTYSLLIHGFCSEENLDEAMNLFEVMVCNGYKP), 321–355 (DSECYFTLIHCLCKGGDFETALILCRESMEKNWVP), and 356–386 (SFSVMKWLVNGLASRSKVDEAKELIAVVKEK).

This sequence belongs to the PPR family. P subfamily.

It is found in the mitochondrion. The polypeptide is Pentatricopeptide repeat-containing protein At1g11630, mitochondrial (Arabidopsis thaliana (Mouse-ear cress)).